The chain runs to 156 residues: Snaclec A2 (156 aa).

The first 23 residues, 1 to 23, serve as a signal peptide directing secretion; sequence MGRLISVSFGLLVVFLSLSGTGA. Cystine bridges form between C27–C38, C55–C154, and C129–C146. One can recognise a C-type lectin domain in the interval 34–155; sequence HEGHCYKVFN…CGQPYRFTCE (122 aa).

The protein belongs to the snaclec family. As to quaternary structure, heterodimer; disulfide-linked. As to expression, expressed by the venom gland.

The protein localises to the secreted. Functionally, interferes with one step of hemostasis (modulation of platelet aggregation, or coagulation cascade, for example). In Macrovipera lebetinus (Levantine viper), this protein is Snaclec A2.